The sequence spans 556 residues: Formate--tetrahydrofolate ligase (556 aa).

Residue Thr-65–Ser-72 coordinates ATP.

The protein belongs to the formate--tetrahydrofolate ligase family.

The enzyme catalyses (6S)-5,6,7,8-tetrahydrofolate + formate + ATP = (6R)-10-formyltetrahydrofolate + ADP + phosphate. The protein operates within one-carbon metabolism; tetrahydrofolate interconversion. This is Formate--tetrahydrofolate ligase from Clostridium perfringens (strain 13 / Type A).